A 487-amino-acid chain; its full sequence is Cobyric acid synthase (487 aa).

The GATase cobBQ-type domain occupies 249 to 435; it reads GIDIAIVRLP…IHGIFDEGDF (187 aa). Cys330 functions as the Nucleophile in the catalytic mechanism. The active site involves His427.

This sequence belongs to the CobB/CobQ family. CobQ subfamily.

The protein operates within cofactor biosynthesis; adenosylcobalamin biosynthesis. Functionally, catalyzes amidations at positions B, D, E, and G on adenosylcobyrinic A,C-diamide. NH(2) groups are provided by glutamine, and one molecule of ATP is hydrogenolyzed for each amidation. The protein is Cobyric acid synthase of Clostridium perfringens (strain SM101 / Type A).